We begin with the raw amino-acid sequence, 158 residues long: Snaclec alboaggregin-D subunit alpha (158 aa).

The signal sequence occupies residues 1 to 23; sequence MGRFIFGSFGLLVVFLSLSGTGA. Intrachain disulfides connect Cys27/Cys38, Cys55/Cys152, and Cys127/Cys144. Residues 34–153 enclose the C-type lectin domain; that stretch reads YDRYCYQAFS…CAELNPFICK (120 aa).

Belongs to the snaclec family. In terms of assembly, tetramer of heterodimers of alpha and beta subunits (alphabeta)(4); disulfide-linked. In terms of tissue distribution, expressed by the venom gland.

It localises to the secreted. Functionally, snaclec that induces human platelet aggregation in the absence of any cofactor with the EC(50) of 0.25 nM and causes tyrosine phosphorylation in human platelets. Antibodies against either platelet GPIbalpha (GP1BA) or GPVI (GP6) inhibit alboaggregin D-induced platelet aggregation. Only the combination of these two antibodies completely inhibit aggregation, suggesting that it acts through both GPIbalpha (GP1BA) and GPVI (GP6). In Trimeresurus albolabris (White-lipped pit viper), this protein is Snaclec alboaggregin-D subunit alpha.